The following is a 511-amino-acid chain: MDIRPAEISEILKSQIASFDSEANVAETGQVLSVGDGIARVYGLQNVMAGELVEFPSAGLKGMALNLENDNVGVVIFGDDRQIREGDTVARTREIVDVPVGRGLLGRVVDALGNPIDGKGPLTDVTRTRVEVKAPGIIPRKSVHEPMQTGLKSVDALIPIGRGQRELVIGDRQTGKTTVILDTFINQKPINQGTDESKKLYCIYVAVGQKRSTVAQIVRTLEEQGAMEYSIVVAATASDPAPMQFLAPYTGCAMGEFFRDNAMHAVIAYDDLSKQAVAYRQMSLLLRRPPGREAYPGDVFYLHSRLLERAAKMNDAHGAGSLTALPVIETQAGDVSAYIPTNVISITDGQIFLETELFFKGIRPAVNVGLSVSRVGSSAQIKAMKQVAGSIKLELAQYREMAAFAQFASDLDASTQKLLARGARLTELLKQPQFTPYPVELQVAVIFAGVKGYLDAIPTDKVVEFERRLVAELRGAQKDILDAIRNDREVKSETEAKLRSFLEGFVKNFTV.

ATP is bound at residue 170–177 (GDRQTGKT).

It belongs to the ATPase alpha/beta chains family. In terms of assembly, F-type ATPases have 2 components, CF(1) - the catalytic core - and CF(0) - the membrane proton channel. CF(1) has five subunits: alpha(3), beta(3), gamma(1), delta(1), epsilon(1). CF(0) has three main subunits: a(1), b(2) and c(9-12). The alpha and beta chains form an alternating ring which encloses part of the gamma chain. CF(1) is attached to CF(0) by a central stalk formed by the gamma and epsilon chains, while a peripheral stalk is formed by the delta and b chains.

The protein resides in the cell inner membrane. It carries out the reaction ATP + H2O + 4 H(+)(in) = ADP + phosphate + 5 H(+)(out). Produces ATP from ADP in the presence of a proton gradient across the membrane. The alpha chain is a regulatory subunit. This chain is ATP synthase subunit alpha, found in Granulibacter bethesdensis (strain ATCC BAA-1260 / CGDNIH1).